The primary structure comprises 362 residues: UDP-3-O-acylglucosamine N-acyltransferase (362 aa).

The active-site Proton acceptor is the H251.

Belongs to the transferase hexapeptide repeat family. LpxD subfamily. Homotrimer.

It catalyses the reaction a UDP-3-O-[(3R)-3-hydroxyacyl]-alpha-D-glucosamine + a (3R)-hydroxyacyl-[ACP] = a UDP-2-N,3-O-bis[(3R)-3-hydroxyacyl]-alpha-D-glucosamine + holo-[ACP] + H(+). It functions in the pathway bacterial outer membrane biogenesis; LPS lipid A biosynthesis. In terms of biological role, catalyzes the N-acylation of UDP-3-O-acylglucosamine using 3-hydroxyacyl-ACP as the acyl donor. Is involved in the biosynthesis of lipid A, a phosphorylated glycolipid that anchors the lipopolysaccharide to the outer membrane of the cell. The chain is UDP-3-O-acylglucosamine N-acyltransferase from Cupriavidus pinatubonensis (strain JMP 134 / LMG 1197) (Cupriavidus necator (strain JMP 134)).